A 693-amino-acid chain; its full sequence is Glycine--tRNA ligase beta subunit (693 aa).

It belongs to the class-II aminoacyl-tRNA synthetase family. Tetramer of two alpha and two beta subunits.

The protein localises to the cytoplasm. The enzyme catalyses tRNA(Gly) + glycine + ATP = glycyl-tRNA(Gly) + AMP + diphosphate. The polypeptide is Glycine--tRNA ligase beta subunit (Vibrio vulnificus (strain CMCP6)).